A 164-amino-acid chain; its full sequence is R-phycoerythrin alpha chain (164 aa).

2 residues coordinate (2R,3E)-phycoerythrobilin: Cys82 and Cys139.

It belongs to the phycobiliprotein family. Heterodimer of an alpha and a beta chain. Post-translationally, contains two covalently linked bilin chromophores.

It localises to the plastid. The protein localises to the chloroplast thylakoid membrane. Light-harvesting photosynthetic bile pigment-protein from the phycobiliprotein complex. This is R-phycoerythrin alpha chain (cpeA) from Lophosiphonia boldii (Red alga).